We begin with the raw amino-acid sequence, 145 residues long: MQFNIQDIIKMLPHSYPFLLLDKVTACVPNESATAIKNVTFNEPFFIGHFPNNPVMPGVLIVEAMAQACLVCVMSDSKCNFENYTIYFMSIELAKFRKPVIPGDILTIEVNVIHKRKDTCRFQCFARVDQALASEAQILAMIKKN.

Histidine 49 is an active-site residue.

Belongs to the thioester dehydratase family. FabZ subfamily.

Its subcellular location is the cytoplasm. It catalyses the reaction a (3R)-hydroxyacyl-[ACP] = a (2E)-enoyl-[ACP] + H2O. Functionally, involved in unsaturated fatty acids biosynthesis. Catalyzes the dehydration of short chain beta-hydroxyacyl-ACPs and long chain saturated and unsaturated beta-hydroxyacyl-ACPs. In Ehrlichia ruminantium (strain Welgevonden), this protein is 3-hydroxyacyl-[acyl-carrier-protein] dehydratase FabZ.